A 467-amino-acid polypeptide reads, in one-letter code: NALCN channel auxiliary factor 1 (467 aa).

Residues 40–60 (LSLASLLFFTVLLSDHLWFCA) traverse the membrane as a helical segment. Residues 121-161 (MGESSPAAQAHRLLSASSSPTLPPSPGGGGGSKGNRGKNNR) form a disordered region. N-linked (GlcNAc...) asparagine glycans are attached at residues N160, N226, and N254. Cystine bridges form between C200/C270, C235/C322, C255/C270, C313/C350, C333/C386, C339/C385, and C343/C370. Basic and acidic residues predominate over residues 390 to 408 (SEEQTAPRPKGTVDRRDSC). Residues 390–409 (SEEQTAPRPKGTVDRRDSCP) are disordered. Residues 426–446 (LKLCVLVLILLHTVLTASAAQ) form a helical membrane-spanning segment. N-linked (GlcNAc...) asparagine glycosylation occurs at N462.

Belongs to the NALF family. As to quaternary structure, component of the NALCN channel complex. NALCN complex consists of NALCN and auxiliary subunits, UNC79, UNC80 and NACL1. These auxiliary subunits are essential for the NALCN channel function.

Its subcellular location is the cell membrane. Its function is as follows. Auxillary component of the NALCN sodium channel complex, a channel that regulates the resting membrane potential and controls neuronal excitability. The protein is NALCN channel auxiliary factor 1 of Mus musculus (Mouse).